The chain runs to 283 residues: MEMO1 family protein MK0963 (283 aa).

This sequence belongs to the MEMO1 family.

This Methanopyrus kandleri (strain AV19 / DSM 6324 / JCM 9639 / NBRC 100938) protein is MEMO1 family protein MK0963.